Consider the following 259-residue polypeptide: UPF0246 protein PFLU_0992 (259 aa).

Belongs to the UPF0246 family.

The sequence is that of UPF0246 protein PFLU_0992 from Pseudomonas fluorescens (strain SBW25).